Here is a 478-residue protein sequence, read N- to C-terminus: Serralysin C (478 aa).

Positions 1–17 are excised as a propeptide; that stretch reads MEKNLSSRDDDALHSLS. His-187 contacts Zn(2+). The active site involves Glu-188. Residues His-191 and Tyr-227 each coordinate Zn(2+). 30 residues coordinate Ca(2+): Arg-264, Gly-266, Asp-296, Gly-298, Gly-299, Asp-301, Thr-338, Glu-340, Gly-345, Gly-347, Asp-349, Asn-354, Ala-356, Asn-358, Gly-362, Gly-363, Ala-364, Gly-365, Asp-367, Gly-371, Gly-372, Gly-374, Asp-376, Gly-380, Gly-381, Gly-383, Asp-385, Asp-394, Asp-401, and Asp-411. Hemolysin-type calcium-binding repeat units lie at residues 343–360 and 361–378; these read IGGS…DNTL and RGGA…ADRL.

This sequence belongs to the peptidase M10B family. It depends on Ca(2+) as a cofactor. Zn(2+) serves as cofactor.

Its subcellular location is the secreted. The enzyme catalyses Preferential cleavage of bonds with hydrophobic residues in P1'.. This is Serralysin C (prtC) from Dickeya chrysanthemi (Pectobacterium chrysanthemi).